Here is a 332-residue protein sequence, read N- to C-terminus: MTSDSFLAPHIPVLLDEVIEALSPVEGGIYIDGTFGAGGYSRAILEKADTQVIAFDRDPDAIREGASLVEKYKGRLRLVNDCFSNIGHHLDALDIKTVDGMVFDIGVSSMQIDRPERGFSIQADGPLDMRMAQAGLSAEEFLNNAQEKDIADVLYLYGEERQSRRVARAIVAARPLTTTFQLAKVIRQSLGYRPFDKKDPAAHCFQAIRIHLNRELDELKDGLQTAERFLKTKGCLAVVTFHSLEDRIVKHFMREHAGQTGQVSRHQPVIPQQNPVFFSKPARPVRAGETELARNPRARSATLRAVYRTETPFSEDISRPDTHIPRSRRQSA.

Residues 38–40, Asp56, Phe83, Asp104, and Gln111 each bind S-adenosyl-L-methionine; that span reads GGY. The tract at residues 309–332 is disordered; sequence TETPFSEDISRPDTHIPRSRRQSA.

It belongs to the methyltransferase superfamily. RsmH family.

The protein resides in the cytoplasm. The enzyme catalyses cytidine(1402) in 16S rRNA + S-adenosyl-L-methionine = N(4)-methylcytidine(1402) in 16S rRNA + S-adenosyl-L-homocysteine + H(+). In terms of biological role, specifically methylates the N4 position of cytidine in position 1402 (C1402) of 16S rRNA. This chain is Ribosomal RNA small subunit methyltransferase H, found in Zymomonas mobilis subsp. mobilis (strain ATCC 31821 / ZM4 / CP4).